The sequence spans 603 residues: Arginine--tRNA ligase (603 aa).

Residues proline 143–histidine 153 carry the 'HIGH' region motif.

It belongs to the class-I aminoacyl-tRNA synthetase family. As to quaternary structure, monomer.

The protein localises to the cytoplasm. It catalyses the reaction tRNA(Arg) + L-arginine + ATP = L-arginyl-tRNA(Arg) + AMP + diphosphate. This Prochlorococcus marinus (strain MIT 9303) protein is Arginine--tRNA ligase.